Here is a 234-residue protein sequence, read N- to C-terminus: UstYa family oxidase phomYd' (234 aa).

Residues 1–26 (MEKFFSPSRHNYADLSPTDVPASEES) are disordered. A helical membrane pass occupies residues 47–69 (VLVNRLLAASTVALVMVSLWLGW). An HXXHC 1 motif is present at residues 151–155 (HWDHC). N-linked (GlcNAc...) asparagine glycosylation occurs at Asn208.

Belongs to the ustYa family.

The protein resides in the membrane. Its pathway is mycotoxin biosynthesis. In terms of biological role, ustYa family oxidase; part of the gene cluster that mediates the biosynthesis of the phomopsins, a group of hexapeptide mycotoxins which infects lupins and causes lupinosis disease in livestock. Within the pathway, phomYd' catalyzes the desaturation of the Asp moiety into 2,3-dehydroaspartic acid (dAsp). The pathway starts with the processing of the precursor phomA' by several endopeptidases including kexin proteases as well as the cluster-specific S41 family peptidase phomP1 and the oligopeptidase phomG' to produce 10 identical copies of the hexapeptide Tyr-Val-Ile-Pro-Ile-Asp. After being excised from the precursor peptide, the core peptides are cyclized and modified post-translationally by enzymes encoded within the gene cluster. The timing and order of proteolysis of the phomA' precursor and PTMs are still unknown. Two tyrosinase-like enzymes, phomQ1' and phomQ2, catalyze the chlorination and hydroxylation of Tyr, respectively. PhomYb, is proposed to be involved in the construction of the macrocyclic structure. The other 4 ustYa family proteins may be involved in PTMs that generate the unique structure of phomopsin A. PhomYa' is required for the hydroxylation of C-beta of Tyr. PhomYc', phomYd', and phomYe are responsible for the biosynthesis of 2,3-dehydroisoleucine (dIle), 2,3-dehydroaspartic acid (dAsp), and 3,4-dehydroproline (dPro), respectively. While dIle formation by phomYc' is indispensable for the installation of dAsp by phomYd', the order of the other PTMs have not been elucidated yet. Most of the biosynthetic enzymes likely have broad substrate specificity, and thus, there might be a metabolic grid from a precursor to phomopsin A. The enzyme(s) responsible for the biosynthesis of 3,4-dehydrovaline (dVal) have also not been identified yet. Finally, phomM' acts as an S-adenosylmethionine-dependent alpha-N-methyltransferase that catalyzes two successive N-methylation reactions, converting N-desmethyl-phomopsin A to phomopsin A and phomopsin A further to an N,N-dimethylated congener called phomopsin E. This Diaporthe leptostromiformis (Lupinosis disease fungus) protein is UstYa family oxidase phomYd'.